A 134-amino-acid polypeptide reads, in one-letter code: ATP synthase epsilon chain (134 aa).

The protein belongs to the ATPase epsilon chain family. As to quaternary structure, F-type ATPases have 2 components, CF(1) - the catalytic core - and CF(0) - the membrane proton channel. CF(1) has five subunits: alpha(3), beta(3), gamma(1), delta(1), epsilon(1). CF(0) has three main subunits: a, b and c.

It is found in the cell membrane. In terms of biological role, produces ATP from ADP in the presence of a proton gradient across the membrane. The protein is ATP synthase epsilon chain of Pelotomaculum thermopropionicum (strain DSM 13744 / JCM 10971 / SI).